A 449-amino-acid polypeptide reads, in one-letter code: Dynein axonemal assembly factor 3 (449 aa).

The protein belongs to the DNAAF3 family.

It localises to the cytoplasm. It is found in the dynein axonemal particle. Its function is as follows. Required for the assembly of axonemal inner and outer dynein arms. Involved in preassembly of dyneins into complexes before their transport into cilia. This is Dynein axonemal assembly factor 3 (dnaaf3) from Xenopus tropicalis (Western clawed frog).